Reading from the N-terminus, the 345-residue chain is Anthranilate phosphoribosyltransferase (345 aa).

Residues G84, 87–88 (GD), T92, 94–97 (NIST), 112–120 (KHGNRSVSS), and S124 contribute to the 5-phospho-alpha-D-ribose 1-diphosphate site. G84 is an anthranilate binding site. Residue S96 coordinates Mg(2+). N115 contacts anthranilate. R170 serves as a coordination point for anthranilate. D229 and E230 together coordinate Mg(2+).

The protein belongs to the anthranilate phosphoribosyltransferase family. In terms of assembly, homodimer. The cofactor is Mg(2+).

It catalyses the reaction N-(5-phospho-beta-D-ribosyl)anthranilate + diphosphate = 5-phospho-alpha-D-ribose 1-diphosphate + anthranilate. It participates in amino-acid biosynthesis; L-tryptophan biosynthesis; L-tryptophan from chorismate: step 2/5. In terms of biological role, catalyzes the transfer of the phosphoribosyl group of 5-phosphorylribose-1-pyrophosphate (PRPP) to anthranilate to yield N-(5'-phosphoribosyl)-anthranilate (PRA). This chain is Anthranilate phosphoribosyltransferase, found in Xanthomonas campestris pv. campestris (strain B100).